The sequence spans 822 residues: DNA gyrase subunit A (822 aa).

A Topo IIA-type catalytic domain is found at 32-497 (LPDVRDGLKP…QVLSLEDEDL (466 aa)). The O-(5'-phospho-DNA)-tyrosine intermediate role is filled by Tyr120. The GyrA-box motif lies at 524–530 (QKRGGRG).

It belongs to the type II topoisomerase GyrA/ParC subunit family. Heterotetramer, composed of two GyrA and two GyrB chains. In the heterotetramer, GyrA contains the active site tyrosine that forms a transient covalent intermediate with DNA, while GyrB binds cofactors and catalyzes ATP hydrolysis.

It is found in the cytoplasm. The catalysed reaction is ATP-dependent breakage, passage and rejoining of double-stranded DNA.. In terms of biological role, a type II topoisomerase that negatively supercoils closed circular double-stranded (ds) DNA in an ATP-dependent manner to modulate DNA topology and maintain chromosomes in an underwound state. Negative supercoiling favors strand separation, and DNA replication, transcription, recombination and repair, all of which involve strand separation. Also able to catalyze the interconversion of other topological isomers of dsDNA rings, including catenanes and knotted rings. Type II topoisomerases break and join 2 DNA strands simultaneously in an ATP-dependent manner. The protein is DNA gyrase subunit A of Streptococcus pneumoniae serotype 4 (strain ATCC BAA-334 / TIGR4).